Here is a 221-residue protein sequence, read N- to C-terminus: Thiamine-phosphate synthase (221 aa).

4-amino-2-methyl-5-(diphosphooxymethyl)pyrimidine-binding positions include 46–50 (QFREK) and asparagine 82. Mg(2+)-binding residues include aspartate 83 and aspartate 102. Serine 121 is a 4-amino-2-methyl-5-(diphosphooxymethyl)pyrimidine binding site. A 2-[(2R,5Z)-2-carboxy-4-methylthiazol-5(2H)-ylidene]ethyl phosphate-binding site is contributed by 148–150 (TQS). Lysine 151 contacts 4-amino-2-methyl-5-(diphosphooxymethyl)pyrimidine. Residues glycine 180 and 200 to 201 (IS) contribute to the 2-[(2R,5Z)-2-carboxy-4-methylthiazol-5(2H)-ylidene]ethyl phosphate site.

It belongs to the thiamine-phosphate synthase family. Mg(2+) serves as cofactor.

It carries out the reaction 2-[(2R,5Z)-2-carboxy-4-methylthiazol-5(2H)-ylidene]ethyl phosphate + 4-amino-2-methyl-5-(diphosphooxymethyl)pyrimidine + 2 H(+) = thiamine phosphate + CO2 + diphosphate. The catalysed reaction is 2-(2-carboxy-4-methylthiazol-5-yl)ethyl phosphate + 4-amino-2-methyl-5-(diphosphooxymethyl)pyrimidine + 2 H(+) = thiamine phosphate + CO2 + diphosphate. It catalyses the reaction 4-methyl-5-(2-phosphooxyethyl)-thiazole + 4-amino-2-methyl-5-(diphosphooxymethyl)pyrimidine + H(+) = thiamine phosphate + diphosphate. It functions in the pathway cofactor biosynthesis; thiamine diphosphate biosynthesis; thiamine phosphate from 4-amino-2-methyl-5-diphosphomethylpyrimidine and 4-methyl-5-(2-phosphoethyl)-thiazole: step 1/1. Condenses 4-methyl-5-(beta-hydroxyethyl)thiazole monophosphate (THZ-P) and 2-methyl-4-amino-5-hydroxymethyl pyrimidine pyrophosphate (HMP-PP) to form thiamine monophosphate (TMP). The chain is Thiamine-phosphate synthase from Pasteurella multocida (strain Pm70).